A 189-amino-acid chain; its full sequence is MSRFIPIELHHASRLLNHGPTVLITSFDEQSQRRNIMAAAWSMPVEFEPPRVAIVVDKSTWTRELIEHNGKFGIVIPGVAATNWTWAVGSVSGRDEDKFNCYGIPVVRGPVFGLPLVEEKCLAWMECRLLPATSAQEEYDTLFGEVVSAAADARVFVEGRWQFDDDKLNTLHHLGAGTFVTSGKRVTAG.

It belongs to the flavoredoxin family. It depends on FMN as a cofactor.

This is an uncharacterized protein from Escherichia coli (strain K12).